The following is a 1388-amino-acid chain: MSRPPPTGKMPGAPETAPGDGAGASRQRKLEALIRDPRSPINVESLLDGLNSLVLDLDFPALRKNKNIDNFLNRYEKIVKKIRGLQMKAEDYDVVKVIGRGAFGEVQLVRHKASQKVYAMKLLSKFEMIKRSDSAFFWEERDIMAFANSPWVVQLFYAFQDDRYLYMVMEYMPGGDLVNLMSNYDVPEKWAKFYTAEVVLALDAIHSMGLIHRDVKPDNMLLDKHGHLKLADFGTCMKMDETGMVHCDTAVGTPDYISPEVLKSQGGDGFYGRECDWWSVGVFLYEMLVGDTPFYADSLVGTYSKIMDHKNSLCFPEDAEISKHAKNLICAFLTDREVRLGRNGVEEIRQHPFFKNDQWHWDNIRETAAPVVPELSSDIDSSNFDDIEDDKGDVETFPIPKAFVGNQLPFIGFTYYRENLLLSDSPSCRETDSIQSRKNEESQEIQKKLYTLEEHLSNEMQAKEELEQKCKSVNTRLEKTAKELEEEITLRKSVESALRQLEREKALLQHKNAEYQRKADHEADKKRNLENDVNSLKDQLEDLKKRNQNSQISTEKVNQLQRQLDETNALLRTESDTAARLRKTQAESSKQIQQLESNNRDLQDKNCLLETAKLKLEKEFINLQSALESERRDRTHGSEIINDLQGRICGLEEDLKNGKILLAKVELEKRQLQERFTDLEKEKSNMEIDMTYQLKVIQQSLEQEEAEHKATKARLADKNKIYESIEEAKSEAMKEMEKKLLEERTLKQKVENLLLEAEKRCSLLDCDLKQSQQKINELLKQKDVLNEDVRNLTLKIEQETQKRCLTQNDLKMQTQQVNTLKMSEKQLKQENNHLMEMKMNLEKQNAELRKERQDADGQMKELQDQLEAEQYFSTLYKTQVRELKEECEEKTKLGKELQQKKQELQDERDSLAAQLEITLTKADSEQLARSIAEEQYSDLEKEKIMKELEIKEMMARHKQELTEKDATIASLEETNRTLTSDVANLANEKEELNNKLKDVQEQLSRLKDEEISAAAIKAQFEKQLLTERTLKTQAVNKLAEIMNRKEPVKRGNDTDVRRKEKENRKLHMELKSEREKLTQQMIKYQKELNEMQAQIAEESQIRIELQMTLDSKDSDIEQLRSQLQALHIGLDSSSIGSGPGDAEADDGFPESRLEGWLSLPVRNNTKKFGWVKKYVIVSSKKILFYDSEQDKEQSNPYMVLDIDKLFHVRPVTQTDVYRADAKEIPRIFQILYANEGESKKEQEFPVEPVGEKSNYICHKGHEFIPTLYHFPTNCEACMKPLWHMFKPPPALECRRCHIKCHKDHMDKKEEIIAPCKVYYDISTAKNLLLLANSTEEQQKWVSRLVKKIPKKPPAPDPFARSSPRTSMKIQQNQSIRRPSRQLAPNKPS.

Positions 1–27 are disordered; that stretch reads MSRPPPTGKMPGAPETAPGDGAGASRQ. In terms of domain architecture, Protein kinase spans 92–354; the sequence is YDVVKVIGRG…VEEIRQHPFF (263 aa). ATP contacts are provided by residues 98–106 and Lys121; that span reads IGRGAFGEV. Asp214 serves as the catalytic Proton acceptor. The region spanning 357–425 is the AGC-kinase C-terminal domain; it reads DQWHWDNIRE…YRENLLLSDS (69 aa). Residues 363–784 are interaction with PPP1R12A; sequence NIRETAAPVV…INELLKQKDV (422 aa). Positions 373–420 are interaction with NPM1; that stretch reads PELSSDIDSSNFDDIEDDKGDVETFPIPKAFVGNQLPFIGFTYYRENL. Thr414 is subject to Phosphothreonine; by ROCK2. Coiled coils occupy residues 429-1024 and 1053-1131; these read RETD…EKQL and DTDV…IGLD. In terms of domain architecture, REM-1 spans 497–573; the sequence is ALRQLEREKA…LDETNALLRT (77 aa). At Tyr722 the chain carries Phosphotyrosine; by SRC. In terms of domain architecture, RhoBD spans 979 to 1047; that stretch reads TSDVANLANE…LAEIMNRKEP (69 aa). An RHOA binding region spans residues 979-1047; it reads TSDVANLANE…LAEIMNRKEP (69 aa). Ser1137 is modified (phosphoserine). The PH domain occupies 1150–1349; the sequence is ESRLEGWLSL…WVSRLVKKIP (200 aa). Phosphothreonine is present on Thr1212. A Phorbol-ester/DAG-type zinc finger spans residues 1260 to 1315; the sequence is GHEFIPTLYHFPTNCEACMKPLWHMFKPPPALECRRCHIKCHKDHMDKKEEIIAPC. The tract at residues 1345–1388 is disordered; that stretch reads VKKIPKKPPAPDPFARSSPRTSMKIQQNQSIRRPSRQLAPNKPS. Phosphoserine occurs at positions 1362 and 1374. Residues 1362–1376 are compositionally biased toward polar residues; it reads SPRTSMKIQQNQSIR.

The protein belongs to the protein kinase superfamily. AGC Ser/Thr protein kinase family. As to quaternary structure, homodimer. Interacts with IRS1. Interacts with RAF1. Interacts with RHOA (activated by GTP), RHOB and RHOC. Interacts with PPP1R12A. Interacts with EP300. Interacts with CHORDC1. Interacts with BRCA2. Interacts with NPM1; this interaction enhances ROCK2 activity. Interacts with SORL1. Interacts with PJVK. Mg(2+) is required as a cofactor. Post-translationally, phosphorylation at Tyr-722 reduces its binding to RHOA and is crucial for focal adhesion dynamics. Dephosphorylation by PTPN11 stimulates its RHOA binding activity. Cleaved by granzyme B during apoptosis. This leads to constitutive activation of the kinase and membrane blebbing. Expressed in the brain (at protein level).

The protein resides in the cytoplasm. It localises to the cell membrane. Its subcellular location is the nucleus. The protein localises to the cytoskeleton. It is found in the microtubule organizing center. The protein resides in the centrosome. It carries out the reaction L-seryl-[protein] + ATP = O-phospho-L-seryl-[protein] + ADP + H(+). The enzyme catalyses L-threonyl-[protein] + ATP = O-phospho-L-threonyl-[protein] + ADP + H(+). Its activity is regulated as follows. Activated by RHOA binding. Inhibited by Y-27632. Protein kinase which is a key regulator of actin cytoskeleton and cell polarity. Involved in regulation of smooth muscle contraction, actin cytoskeleton organization, stress fiber and focal adhesion formation, neurite retraction, cell adhesion and motility via phosphorylation of ADD1, BRCA2, CNN1, EZR, DPYSL2, EP300, MSN, MYL9/MLC2, NPM1, RDX, PPP1R12A and VIM. Phosphorylates SORL1 and IRF4. Acts as a negative regulator of VEGF-induced angiogenic endothelial cell activation. Positively regulates the activation of p42/MAPK1-p44/MAPK3 and of p90RSK/RPS6KA1 during myogenic differentiation. Plays an important role in the timely initiation of centrosome duplication. Inhibits keratinocyte terminal differentiation. May regulate closure of the eyelids and ventral body wall through organization of actomyosin bundles. Plays a critical role in the regulation of spine and synaptic properties in the hippocampus. Plays an important role in generating the circadian rhythm of the aortic myofilament Ca(2+) sensitivity and vascular contractility by modulating the myosin light chain phosphorylation. This Homo sapiens (Human) protein is Rho-associated protein kinase 2 (ROCK2).